The following is a 597-amino-acid chain: tRNA uridine 5-carboxymethylaminomethyl modification enzyme MnmG (597 aa).

Residue 11 to 16 (GAGHAG) coordinates FAD. 275–289 (SPRYCPSIEEKIERY) provides a ligand contact to NAD(+).

The protein belongs to the MnmG family. In terms of assembly, homodimer. Heterotetramer of two MnmE and two MnmG subunits. FAD serves as cofactor.

Its subcellular location is the cytoplasm. Functionally, NAD-binding protein involved in the addition of a carboxymethylaminomethyl (cmnm) group at the wobble position (U34) of certain tRNAs, forming tRNA-cmnm(5)s(2)U34. The sequence is that of tRNA uridine 5-carboxymethylaminomethyl modification enzyme MnmG from Endomicrobium trichonymphae.